A 397-amino-acid polypeptide reads, in one-letter code: Major outer membrane porin, serovar L3 (397 aa).

The N-terminal stretch at 1-22 (MKKLLKSVLVFAALSSASSLQA) is a signal peptide.

Belongs to the chlamydial porin (CP) (TC 1.B.2) family. As to quaternary structure, part of a disulfide cross-linked outer membrane complex (COMC) composed of the major outer membrane porin (MOMP), the small cysteine-rich protein (OmcA) and the large cysteine-rich periplasmic protein (OmcB).

The protein localises to the cell outer membrane. In terms of biological role, in elementary bodies (EBs, the infectious stage, which is able to survive outside the host cell) provides the structural integrity of the outer envelope through disulfide cross-links with the small cysteine-rich protein and the large cysteine-rich periplasmic protein. It has been described in publications as the Sarkosyl-insoluble COMC (Chlamydia outer membrane complex), and serves as the functional equivalent of peptidoglycan. Its function is as follows. Permits diffusion of specific solutes through the outer membrane. The sequence is that of Major outer membrane porin, serovar L3 (ompA) from Chlamydia trachomatis.